A 610-amino-acid polypeptide reads, in one-letter code: Probable pleckstrin homology domain-containing family N member 1 (610 aa).

The tract at residues 1–30 is disordered; sequence MGNSHCVPQAPRRLRASFSRKPSLKGNRED. G2 carries the N-myristoyl glycine lipid modification. Residues 61–100 are interaction with C1QBP; sequence TDIPGPEHHPENLEQPFLSVFKKGWRRTPVRNLGKVVHYS. PH domains follow at residues 96–192 and 227–324; these read VVHY…MALL and AICA…SRRD. Position 307 is a phosphotyrosine (Y307). Disordered stretches follow at residues 327 to 357, 371 to 431, 443 to 473, and 493 to 610; these read HLPP…SNGR, QSLP…PLPL, LDSG…ATSR, and PGPD…IQWI. 2 stretches are compositionally biased toward polar residues: residues 371-380 and 391-402; these read QSLPESSVPT and NQTDSNCVSTGQ. The residue at position 462 (Y462) is a Phosphotyrosine. Positions 504 to 526 are enriched in low complexity; sequence VSVSVPVSESSSGISSSPGPLGS.

Found in a complex with cytochrome c mRNA and various ribosomal proteins. Interacts with C1QBP, ELAVL1 and BID. Phosphorylation is essential for its mitochondrial localization and regulates its interaction with C1QBP. In terms of tissue distribution, testis and adipose tissue (at protein level). Ubiquitous.

Its subcellular location is the cell membrane. The protein localises to the mitochondrion membrane. It is found in the mitochondrion. Functionally, controls the stability of the leptin mRNA harboring an AU-rich element (ARE) in its 3' UTR, in cooperation with the RNA stabilizer ELAVL1. Decreases the stability of the leptin mRNA by antagonizing the function of ELAVL1 by inducing its atypical recruitment from the nucleus to the cytosol. Binds to cardiolipin (CL), phosphatidic acid (PA), phosphatidylinositol 4-phosphate (PtdIns(4)P) and phosphatidylserine (PS). The polypeptide is Probable pleckstrin homology domain-containing family N member 1 (Plekhn1) (Mus musculus (Mouse)).